A 309-amino-acid chain; its full sequence is Syndecan-1 (309 aa).

Positions Met1–Pro22 are cleaved as a signal peptide. The Extracellular portion of the chain corresponds to Ile24–Gly253. 2 disordered regions span residues Asn28–Leu57 and Ala142–Ser185. The segment covering Glu32–Asp42 has biased composition (acidic residues). Residue Ser37 is glycosylated (O-linked (Xyl...) (chondroitin sulfate) serine). Asn43 carries an N-linked (GlcNAc...) asparagine glycan. O-linked (Xyl...) (heparan sulfate) serine glycans are attached at residues Ser45 and Ser47. Residues Ala142–Val151 show a composition bias toward polar residues. O-linked (Xyl...) (chondroitin sulfate) serine glycans are attached at residues Ser205 and Ser215. The helical transmembrane segment at Gly254–Leu274 threads the bilayer. At Tyr275–Ala309 the chain is on the cytoplasmic side. The segment at Gly283–Ala309 is disordered. A Phosphoserine modification is found at Ser284.

It belongs to the syndecan proteoglycan family. Interacts with CDCP1. Interacts (via C-terminus) with TIAM1 (via PDZ domain). Interacts with MDK. Shedding is enhanced by a number of factors such as heparanase, thrombin or EGF. Also by stress and wound healing. PMA-mediated shedding is inhibited by TIMP3.

It localises to the membrane. The protein resides in the secreted. It is found in the extracellular exosome. In terms of biological role, cell surface proteoglycan that contains both heparan sulfate and chondroitin sulfate and that links the cytoskeleton to the interstitial matrix. Regulates exosome biogenesis in concert with SDCBP and PDCD6IP. Able to induce its own expression in dental mesenchymal cells and also in the neighboring dental epithelial cells via an MSX1-mediated pathway. The chain is Syndecan-1 from Cricetulus griseus (Chinese hamster).